The primary structure comprises 570 residues: Sulfite reductase [NADPH] hemoprotein beta-component (570 aa).

Cys434, Cys440, Cys479, and Cys483 together coordinate [4Fe-4S] cluster. Residue Cys483 coordinates siroheme.

Belongs to the nitrite and sulfite reductase 4Fe-4S domain family. As to quaternary structure, alpha(8)-beta(8). The alpha component is a flavoprotein, the beta component is a hemoprotein. Siroheme is required as a cofactor. The cofactor is [4Fe-4S] cluster.

The enzyme catalyses hydrogen sulfide + 3 NADP(+) + 3 H2O = sulfite + 3 NADPH + 4 H(+). It participates in sulfur metabolism; hydrogen sulfide biosynthesis; hydrogen sulfide from sulfite (NADPH route): step 1/1. Functionally, component of the sulfite reductase complex that catalyzes the 6-electron reduction of sulfite to sulfide. This is one of several activities required for the biosynthesis of L-cysteine from sulfate. The polypeptide is Sulfite reductase [NADPH] hemoprotein beta-component (Escherichia coli O127:H6 (strain E2348/69 / EPEC)).